The sequence spans 537 residues: Chaperonin GroEL (537 aa).

ATP contacts are provided by residues 29 to 32 (TLGP), 86 to 90 (DGTTT), glycine 413, and aspartate 492.

The protein belongs to the chaperonin (HSP60) family. Forms a cylinder of 14 subunits composed of two heptameric rings stacked back-to-back. Interacts with the co-chaperonin GroES.

It is found in the cytoplasm. It carries out the reaction ATP + H2O + a folded polypeptide = ADP + phosphate + an unfolded polypeptide.. Together with its co-chaperonin GroES, plays an essential role in assisting protein folding. The GroEL-GroES system forms a nano-cage that allows encapsulation of the non-native substrate proteins and provides a physical environment optimized to promote and accelerate protein folding. This is Chaperonin GroEL from Dehalococcoides mccartyi (strain ATCC BAA-2100 / JCM 16839 / KCTC 5957 / BAV1).